The chain runs to 238 residues: Ribonuclease PH (238 aa).

Phosphate is bound by residues Arg86 and 124-126 (GTR).

Belongs to the RNase PH family. In terms of assembly, homohexameric ring arranged as a trimer of dimers.

The catalysed reaction is tRNA(n+1) + phosphate = tRNA(n) + a ribonucleoside 5'-diphosphate. In terms of biological role, phosphorolytic 3'-5' exoribonuclease that plays an important role in tRNA 3'-end maturation. Removes nucleotide residues following the 3'-CCA terminus of tRNAs; can also add nucleotides to the ends of RNA molecules by using nucleoside diphosphates as substrates, but this may not be physiologically important. Probably plays a role in initiation of 16S rRNA degradation (leading to ribosome degradation) during starvation. The polypeptide is Ribonuclease PH (Caulobacter vibrioides (strain ATCC 19089 / CIP 103742 / CB 15) (Caulobacter crescentus)).